We begin with the raw amino-acid sequence, 101 residues long: Small ribosomal subunit protein bS18c (101 aa).

Residues 1–19 (MDKSKRLFRKSKRSFRRRL) show a composition bias toward basic residues. The segment at 1-23 (MDKSKRLFRKSKRSFRRRLPPIG) is disordered.

Belongs to the bacterial ribosomal protein bS18 family. Part of the 30S ribosomal subunit.

The protein localises to the plastid. It is found in the chloroplast. This chain is Small ribosomal subunit protein bS18c, found in Liriodendron tulipifera (Tuliptree).